A 351-amino-acid chain; its full sequence is N-acetyl-gamma-glutamyl-phosphate reductase (351 aa).

The active site involves Cys-154.

This sequence belongs to the NAGSA dehydrogenase family. Type 1 subfamily.

It localises to the cytoplasm. It carries out the reaction N-acetyl-L-glutamate 5-semialdehyde + phosphate + NADP(+) = N-acetyl-L-glutamyl 5-phosphate + NADPH + H(+). Its pathway is amino-acid biosynthesis; L-arginine biosynthesis; N(2)-acetyl-L-ornithine from L-glutamate: step 3/4. Its function is as follows. Catalyzes the NADPH-dependent reduction of N-acetyl-5-glutamyl phosphate to yield N-acetyl-L-glutamate 5-semialdehyde. The polypeptide is N-acetyl-gamma-glutamyl-phosphate reductase (Prochlorococcus marinus (strain MIT 9301)).